The following is a 231-amino-acid chain: Large ribosomal subunit protein uL1 (231 aa).

Belongs to the universal ribosomal protein uL1 family. Part of the 50S ribosomal subunit.

In terms of biological role, binds directly to 23S rRNA. The L1 stalk is quite mobile in the ribosome, and is involved in E site tRNA release. Functionally, protein L1 is also a translational repressor protein, it controls the translation of the L11 operon by binding to its mRNA. The protein is Large ribosomal subunit protein uL1 of Neisseria meningitidis serogroup C (strain 053442).